The primary structure comprises 60 residues: Large ribosomal subunit protein uL30 (60 aa).

Belongs to the universal ribosomal protein uL30 family. Part of the 50S ribosomal subunit.

The protein is Large ribosomal subunit protein uL30 of Salinispora tropica (strain ATCC BAA-916 / DSM 44818 / JCM 13857 / NBRC 105044 / CNB-440).